Consider the following 244-residue polypeptide: Thiol S-methyltransferase TMT1B (244 aa).

The signal sequence occupies residues 1-23; the sequence is MDALVLFLQLLVLLLTLPLHLLA.

Belongs to the methyltransferase superfamily.

It is found in the endoplasmic reticulum membrane. The protein localises to the lipid droplet. The protein resides in the microsome. It localises to the cytoplasm. Its subcellular location is the cytosol. The enzyme catalyses a thiol + S-adenosyl-L-methionine = a methyl thioether + S-adenosyl-L-homocysteine + H(+). Functionally, thiol S-methyltransferase that catalyzes the transfer of a methyl group from S-adenosyl-L-methionine to alkyl and phenolic thiol-containing acceptor substrates. Together with TMT1B accounts for most of S-thiol methylation activity in the endoplasmic reticulum of hepatocytes. Selectively methylates S-centered nucleophiles from metabolites such as hydrogen sulfide and dithiothreitol. The polypeptide is Thiol S-methyltransferase TMT1B (Mus musculus (Mouse)).